The chain runs to 450 residues: tRNA-2-methylthio-N(6)-dimethylallyladenosine synthase (450 aa).

The 115-residue stretch at 17–131 (KKFFVKTYGC…LNHVLDEVLA (115 aa)) folds into the MTTase N-terminal domain. The [4Fe-4S] cluster site is built by Cys26, Cys62, Cys94, Cys168, Cys172, and Cys175. Positions 154–385 (REDQIKAYVS…LQLQDTIYMK (232 aa)) constitute a Radical SAM core domain. One can recognise a TRAM domain in the interval 388–450 (QAFLGQTVEV…SHQTLLGDLQ (63 aa)).

This sequence belongs to the methylthiotransferase family. MiaB subfamily. In terms of assembly, monomer. [4Fe-4S] cluster serves as cofactor.

The protein resides in the cytoplasm. The enzyme catalyses N(6)-dimethylallyladenosine(37) in tRNA + (sulfur carrier)-SH + AH2 + 2 S-adenosyl-L-methionine = 2-methylsulfanyl-N(6)-dimethylallyladenosine(37) in tRNA + (sulfur carrier)-H + 5'-deoxyadenosine + L-methionine + A + S-adenosyl-L-homocysteine + 2 H(+). Catalyzes the methylthiolation of N6-(dimethylallyl)adenosine (i(6)A), leading to the formation of 2-methylthio-N6-(dimethylallyl)adenosine (ms(2)i(6)A) at position 37 in tRNAs that read codons beginning with uridine. This is tRNA-2-methylthio-N(6)-dimethylallyladenosine synthase from Protochlamydia amoebophila (strain UWE25).